The chain runs to 564 residues: Potassium-transporting ATPase potassium-binding subunit (564 aa).

Helical transmembrane passes span 4 to 24 (YDYWLILAFFAVVLLPAPFLG), 67 to 87 (TLALLAFNLAGFLLLFAILLF), 135 to 155 (VGLTVQNFVSAATGLAVLVAL), 179 to 199 (LYGLLPLCLLLALYLVWQGVP), 258 to 278 (FEVASIILIPVALVFTFGHYV), 286 to 306 (AIIGCMLALFIIGGATSLWAE), 382 to 402 (AGLYGMLLNVLIAVFLAGLMI), 420 to 440 (LLVVTLLVMPVGVLVLGAIAA), 487 to 507 (LMLGLGMLIGRFGYILPVLAL), and 528 to 548 (GPLFVTLLTVTILLLGGLTFL).

The protein belongs to the KdpA family. The system is composed of three essential subunits: KdpA, KdpB and KdpC.

It is found in the cell inner membrane. Its function is as follows. Part of the high-affinity ATP-driven potassium transport (or Kdp) system, which catalyzes the hydrolysis of ATP coupled with the electrogenic transport of potassium into the cytoplasm. This subunit binds the periplasmic potassium ions and delivers the ions to the membrane domain of KdpB through an intramembrane tunnel. The protein is Potassium-transporting ATPase potassium-binding subunit of Pseudomonas fluorescens (strain Pf0-1).